Consider the following 564-residue polypeptide: Potassium-transporting ATPase potassium-binding subunit (564 aa).

10 consecutive transmembrane segments (helical) span residues 4-24 (YDYW…PFLG), 67-87 (TLAL…ILLF), 135-155 (VGLT…LVAL), 179-199 (LYGL…QGVP), 258-278 (FEVA…GHYV), 286-306 (AIIG…LWAE), 382-402 (AGLY…GLMI), 420-440 (LLVV…AIAA), 487-507 (LMLG…VLAL), and 528-548 (GPLF…LTFL).

Belongs to the KdpA family. As to quaternary structure, the system is composed of three essential subunits: KdpA, KdpB and KdpC.

It is found in the cell inner membrane. Functionally, part of the high-affinity ATP-driven potassium transport (or Kdp) system, which catalyzes the hydrolysis of ATP coupled with the electrogenic transport of potassium into the cytoplasm. This subunit binds the periplasmic potassium ions and delivers the ions to the membrane domain of KdpB through an intramembrane tunnel. This chain is Potassium-transporting ATPase potassium-binding subunit, found in Pseudomonas fluorescens (strain Pf0-1).